The chain runs to 448 residues: Lipoamide acyltransferase component of branched-chain alpha-keto acid dehydrogenase complex, mitochondrial (448 aa).

Residues 30–105 (VVQFKLSDIG…RVGQALIDVE (76 aa)) enclose the Lipoyl-binding domain. Lysine 71 carries the N6-lipoyllysine modification. Disordered stretches follow at residues 108–146 (GNVEEPEQPKKEAASSSPEAPKSSAPKAPESAHSEGKVL) and 191–211 (TSGSTNIRTTHQAPQPSSKSY). Over residues 121–136 (ASSSPEAPKSSAPKAP) the composition is skewed to low complexity. Residues 146–183 (LATPAVRRIAIENKIKLAEVRGTGKDGRVLKEDVLKFL) form the Peripheral subunit-binding (PSBD) domain. Residues 191 to 210 (TSGSTNIRTTHQAPQPSSKS) show a composition bias toward polar residues. Residues arginine 257, serine 272, aspartate 315, serine 365, asparagine 366, glycine 390, and isoleucine 392 each coordinate CoA. Active-site residues include histidine 418 and aspartate 422.

This sequence belongs to the 2-oxoacid dehydrogenase family. It depends on (R)-lipoate as a cofactor. Ubiquitously expressed.

It is found in the mitochondrion matrix. Its subcellular location is the cytoplasm. It localises to the cytosol. The protein localises to the cell projection. The protein resides in the dendrite. It is found in the cilium. It catalyses the reaction N(6)-[(R)-dihydrolipoyl]-L-lysyl-[protein] + 2-methylpropanoyl-CoA = N(6)-[(R)-S(8)-2-methylpropanoyldihydrolipoyl]-L-lysyl-[protein] + CoA. Functionally, the branched-chain alpha-keto dehydrogenase complex catalyzes the overall conversion of alpha-keto acids to acyl-CoA and CO(2). It contains multiple copies of three enzymatic components: branched-chain alpha-keto acid decarboxylase (E1), lipoamide acyltransferase (E2) and lipoamide dehydrogenase (E3). Within this complex, the catalytic function of this enzyme is to accept, and to transfer to coenzyme A, acyl groups that are generated by the branched-chain alpha-keto acid decarboxylase component. Required for the catabolism of branched-chain amino acids and the subsequent synthesis of monomethyl branched-chain fatty acids, which are important for regulating postembryonic growth. The chain is Lipoamide acyltransferase component of branched-chain alpha-keto acid dehydrogenase complex, mitochondrial from Caenorhabditis elegans.